The chain runs to 328 residues: Malate dehydrogenase (328 aa).

NAD(+) is bound at residue 12 to 18 (GAAGQIG). Positions 95 and 101 each coordinate substrate. NAD(+) is bound by residues N108, Q115, and 132-134 (VGN). Positions 134 and 165 each coordinate substrate. H190 (proton acceptor) is an active-site residue.

This sequence belongs to the LDH/MDH superfamily. MDH type 2 family.

The enzyme catalyses (S)-malate + NAD(+) = oxaloacetate + NADH + H(+). Its function is as follows. Catalyzes the reversible oxidation of malate to oxaloacetate. The polypeptide is Malate dehydrogenase (Variovorax paradoxus (strain S110)).